The sequence spans 149 residues: Probable flagellum biosynthesis repressor protein FlbT (149 aa).

The protein belongs to the FlbT family.

In terms of biological role, has a post-transcriptional repressor function in flagellum biogenesis. Associates with the 5'-UTR of fljK mRNA and promotes its degradation. In Rhizobium etli (strain ATCC 51251 / DSM 11541 / JCM 21823 / NBRC 15573 / CFN 42), this protein is Probable flagellum biosynthesis repressor protein FlbT.